We begin with the raw amino-acid sequence, 460 residues long: ATP synthase subunit beta (460 aa).

150-157 (GGAGVGKT) contacts ATP.

This sequence belongs to the ATPase alpha/beta chains family. In terms of assembly, F-type ATPases have 2 components, CF(1) - the catalytic core - and CF(0) - the membrane proton channel. CF(1) has five subunits: alpha(3), beta(3), gamma(1), delta(1), epsilon(1). CF(0) has three main subunits: a(1), b(2) and c(9-12). The alpha and beta chains form an alternating ring which encloses part of the gamma chain. CF(1) is attached to CF(0) by a central stalk formed by the gamma and epsilon chains, while a peripheral stalk is formed by the delta and b chains.

It localises to the cell inner membrane. It catalyses the reaction ATP + H2O + 4 H(+)(in) = ADP + phosphate + 5 H(+)(out). Its function is as follows. Produces ATP from ADP in the presence of a proton gradient across the membrane. The catalytic sites are hosted primarily by the beta subunits. The polypeptide is ATP synthase subunit beta (Pectobacterium atrosepticum (strain SCRI 1043 / ATCC BAA-672) (Erwinia carotovora subsp. atroseptica)).